A 400-amino-acid chain; its full sequence is Large envelope protein (400 aa).

Position 1 is an N-acetylmethionine (methionine 1). A lipid anchor (N-myristoyl glycine; by host) is attached at glycine 2. The tract at residues 2-119 is pre-S1; the sequence is GGRLPKPRKG…PPLRDSHPQA (118 aa). Positions 2-174 are pre-S; the sequence is GGRLPKPRKG…SSRIGDPAPT (173 aa). At 2–181 the chain is on the virion surface; in external conformation side; sequence GGRLPKPRKG…APTMENITSG (180 aa). Residues 2-253 are Intravirion; in internal conformation-facing; that stretch reads GGRLPKPRKG…PGYRWMCLRR (252 aa). Arginine 4 is a glycosylation site (N-linked (GlcNAc...) asparagine). Residues 84–116 are disordered; sequence TLTTVPAVPPPASTNRQSGRQPTPISPPLRDSH. The segment covering 96–106 has biased composition (polar residues); it reads STNRQSGRQPT. A pre-S2 region spans residues 120–174; it reads MQWNSTKFHQTLQDPRVRGLYFPAGGSSSGTVNPAPNIASHISSISSRIGDPAPT. The chain crosses the membrane as a helical span at residues 182-202; the sequence is FLGPLLVLQAGFFLLTRILTI. At 203–253 the chain is on the intravirion; in external conformation side; it reads PQSLDSWWTSLNFLGEAPVCLGQNSQSPTSNHSPTSCPPICPGYRWMCLRR. The helical transmembrane segment at 254–274 threads the bilayer; sequence FIIFLFILLLCLIFLLVLLDC. Residues 275–348 lie on the Virion surface side of the membrane; the sequence is QGMLPVCPLI…WASVRFSWLS (74 aa). Residue asparagine 320 is glycosylated (N-linked (GlcNAc...) asparagine; by host). Residues 349–369 form a helical membrane-spanning segment; sequence LLVPFVQWFVGLSPTVWLSVI. The Intravirion segment spans residues 370–375; it reads WMMWYW. Residues 376–398 form a helical membrane-spanning segment; that stretch reads GPSLYNILSPFIPLLPIFFCLWV. The Virion surface portion of the chain corresponds to 399–400; sequence YI.

Belongs to the orthohepadnavirus major surface antigen family. In terms of assembly, in its internal form (Li-HBsAg), interacts with the capsid protein and with the isoform S. Interacts with host chaperone CANX. As to quaternary structure, associates with host chaperone CANX through its pre-S2 N glycan; this association may be essential for isoform M proper secretion. Interacts with isoform L. Interacts with the antigens of satellite virus HDV (HDVAgs); this interaction is required for encapsidation of HDV genomic RNA. In terms of processing, isoform M is N-terminally acetylated by host at a ratio of 90%, and N-glycosylated by host at the pre-S2 region. Myristoylated.

Its subcellular location is the virion membrane. In terms of biological role, the large envelope protein exists in two topological conformations, one which is termed 'external' or Le-HBsAg and the other 'internal' or Li-HBsAg. In its external conformation the protein attaches the virus to cell receptors and thereby initiating infection. This interaction determines the species specificity and liver tropism. This attachment induces virion internalization predominantly through caveolin-mediated endocytosis. The large envelope protein also assures fusion between virion membrane and endosomal membrane. In its internal conformation the protein plays a role in virion morphogenesis and mediates the contact with the nucleocapsid like a matrix protein. The middle envelope protein plays an important role in the budding of the virion. It is involved in the induction of budding in a nucleocapsid independent way. In this process the majority of envelope proteins bud to form subviral lipoprotein particles of 22 nm of diameter that do not contain a nucleocapsid. The sequence is that of Large envelope protein from Hepatitis B virus genotype A3 (isolate Cameroon/CMR711/1994) (HBV-A).